The chain runs to 189 residues: Crossover junction endodeoxyribonuclease RuvC (189 aa).

Catalysis depends on residues Asp-12, Glu-72, and Asp-147. Mg(2+) contacts are provided by Asp-12, Glu-72, and Asp-147.

Belongs to the RuvC family. Homodimer which binds Holliday junction (HJ) DNA. The HJ becomes 2-fold symmetrical on binding to RuvC with unstacked arms; it has a different conformation from HJ DNA in complex with RuvA. In the full resolvosome a probable DNA-RuvA(4)-RuvB(12)-RuvC(2) complex forms which resolves the HJ. Requires Mg(2+) as cofactor.

Its subcellular location is the cytoplasm. It carries out the reaction Endonucleolytic cleavage at a junction such as a reciprocal single-stranded crossover between two homologous DNA duplexes (Holliday junction).. In terms of biological role, the RuvA-RuvB-RuvC complex processes Holliday junction (HJ) DNA during genetic recombination and DNA repair. Endonuclease that resolves HJ intermediates. Cleaves cruciform DNA by making single-stranded nicks across the HJ at symmetrical positions within the homologous arms, yielding a 5'-phosphate and a 3'-hydroxyl group; requires a central core of homology in the junction. The consensus cleavage sequence is 5'-(A/T)TT(C/G)-3'. Cleavage occurs on the 3'-side of the TT dinucleotide at the point of strand exchange. HJ branch migration catalyzed by RuvA-RuvB allows RuvC to scan DNA until it finds its consensus sequence, where it cleaves and resolves the cruciform DNA. The chain is Crossover junction endodeoxyribonuclease RuvC from Porphyromonas gingivalis (strain ATCC BAA-308 / W83).